A 681-amino-acid chain; its full sequence is Type VI secretion system spike protein VgrG1 (681 aa).

Residues 621-640 (NSGGSPSSGSGWGGKSPVDP) form a disordered region.

This sequence belongs to the VgrG protein family.

Its subcellular location is the secreted. It catalyses the reaction L-arginyl-[protein] + NAD(+) = N(omega)-(ADP-D-ribosyl)-L-arginyl-[protein] + nicotinamide + H(+). Part of the type VI secretion system specialized secretion system, which delivers several virulence factors in both prokaryotic and eukaryotic cells during infection. Acts directly as an secreted effector with an actin ADP-ribosyltransferase activity that disrupts the host actin cytoskeleton, leading to a decrease in host cell viability and an increase in apoptosis. This chain is Type VI secretion system spike protein VgrG1 (vgrG1), found in Aeromonas hydrophila.